The sequence spans 596 residues: Invasin CotH7 (596 aa).

Positions 1 to 17 (MKSLSFISLACLTAVHA) are cleaved as a signal peptide. 7 N-linked (GlcNAc...) asparagine glycosylation sites follow: N82, N146, N163, N169, N288, N440, and N544. Positions 528-544 (SATIAAPATSESASQDN) are enriched in low complexity. Residues 528-557 (SATIAAPATSESASQDNTSDDTDSASTSSS) are disordered. The GPI-anchor amidated serine moiety is linked to residue S567. Residues 568–596 (SASKSAPTFYCLQLVLYLSLSFKNLYKYI) constitute a propeptide, removed in mature form.

In terms of assembly, interacts with host integrin beta-1 ITGB1 on the cell surface of host alveolar epithelial cells.

The protein resides in the cell membrane. Promotes invasion of host epithelial cells by adhering to receptors on the host cell surface to facilitate endocytosis of the pathogen into host cells. Probably binds integrin ITGA3:ITGB1 via ITGB1, on the cell surface of host alveolar epithelial cells. This chain is Invasin CotH7, found in Rhizopus delemar (strain RA 99-880 / ATCC MYA-4621 / FGSC 9543 / NRRL 43880) (Mucormycosis agent).